The sequence spans 151 residues: D-aminoacyl-tRNA deacylase (151 aa).

A Gly-cisPro motif, important for rejection of L-amino acids motif is present at residues 137 to 138 (GP).

This sequence belongs to the DTD family. Homodimer.

The protein resides in the cytoplasm. The catalysed reaction is glycyl-tRNA(Ala) + H2O = tRNA(Ala) + glycine + H(+). It carries out the reaction a D-aminoacyl-tRNA + H2O = a tRNA + a D-alpha-amino acid + H(+). Functionally, an aminoacyl-tRNA editing enzyme that deacylates mischarged D-aminoacyl-tRNAs. Also deacylates mischarged glycyl-tRNA(Ala), protecting cells against glycine mischarging by AlaRS. Acts via tRNA-based rather than protein-based catalysis; rejects L-amino acids rather than detecting D-amino acids in the active site. By recycling D-aminoacyl-tRNA to D-amino acids and free tRNA molecules, this enzyme counteracts the toxicity associated with the formation of D-aminoacyl-tRNA entities in vivo and helps enforce protein L-homochirality. The sequence is that of D-aminoacyl-tRNA deacylase from Fusobacterium nucleatum subsp. nucleatum (strain ATCC 25586 / DSM 15643 / BCRC 10681 / CIP 101130 / JCM 8532 / KCTC 2640 / LMG 13131 / VPI 4355).